Consider the following 126-residue polypeptide: Large ribosomal subunit protein bL17 (126 aa).

The protein belongs to the bacterial ribosomal protein bL17 family. In terms of assembly, part of the 50S ribosomal subunit. Contacts protein L32.

The sequence is that of Large ribosomal subunit protein bL17 from Limosilactobacillus fermentum (strain NBRC 3956 / LMG 18251) (Lactobacillus fermentum).